The primary structure comprises 485 residues: Glucagon receptor (485 aa).

The first 26 residues, 1 to 26 (MPLTQLHCPHLLLLLLVLSCLPEAPS), serve as a signal peptide directing secretion. Residues 27–137 (AQVMDFLFEK…EIEVQKGVAK (111 aa)) are Extracellular-facing. Disulfide bonds link C44–C68, C59–C101, and C82–C122. N47, N60, N75, N79, and N118 each carry an N-linked (GlcNAc...) asparagine glycan. A helical transmembrane segment spans residues 138–162 (MYSSQQVMYTVGYSLSLGALLLALV). Over 163–174 (ILLGLRKLHCTR) the chain is Cytoplasmic. A helical transmembrane segment spans residues 175 to 199 (NYIHGNLFASFVLKAGSVLVIDWLL). At 200–226 (KTRYSQKIGDDLSVSVWLSDGAMAGCR) the chain is on the extracellular side. Cysteines 225 and 295 form a disulfide. A helical membrane pass occupies residues 227–250 (VATVIMQYGIIANYCWLLVEGVYL). Over 251-264 (YSLLSLATFSERSF) the chain is Cytoplasmic. The chain crosses the membrane as a helical span at residues 265–286 (FSLYLGIGWGAPLLFVIPWVVV). Topologically, residues 287 to 304 (KCLFENVQCWTSNDNMGF) are extracellular. Residues 305-327 (WWILRIPVFLALLINFFIFVHII) traverse the membrane as a helical segment. Over 328–351 (HLLVAKLRAHQMHYADYKFRLARS) the chain is Cytoplasmic. An important for allosteric inhibitor binding region spans residues 351–354 (STLT). A helical membrane pass occupies residues 352–370 (TLTLIPLLGVHEVVFAFVT). The Extracellular segment spans residues 371–382 (DEHAQGTLRSTK). The chain crosses the membrane as a helical span at residues 383-403 (LFFDLFLSSFQGLLVAVLYCF). At 404 to 485 (LNKEVQAELM…SLPRLADSPT (82 aa)) the chain is on the cytoplasmic side. The span at 457–475 (AGSSSGTGCVPSMETSLAS) shows a compositional bias: polar residues. Residues 457–485 (AGSSSGTGCVPSMETSLASSLPRLADSPT) are disordered. S460 and S476 each carry phosphoserine.

It belongs to the G-protein coupled receptor 2 family. Ligand-binding promotes phosphorylation of serine residues in the C-terminal cytoplasmic domain. Phosphorylation is important for receptor endocytosis after ligand-binding. In terms of tissue distribution, expressed predominantly in liver, kidney, adrenal, lung and stomach, while lower levels of expression are detected in brown and white adipose tissue, cerebellum, duodenum and heart.

The protein resides in the cell membrane. G-protein coupled receptor for glucagon that plays a central role in the regulation of blood glucose levels and glucose homeostasis. Regulates the rate of hepatic glucose production by promoting glycogen hydrolysis and gluconeogenesis. Plays an important role in mediating the responses to fasting. Ligand binding causes a conformation change that triggers signaling via guanine nucleotide-binding proteins (G proteins) and modulates the activity of down-stream effectors, such as adenylate cyclase. Promotes activation of adenylate cyclase. Besides, plays a role in signaling via a phosphatidylinositol-calcium second messenger system. This chain is Glucagon receptor (Gcgr), found in Mus musculus (Mouse).